A 347-amino-acid polypeptide reads, in one-letter code: GPN-loop GTPase 2 (347 aa).

Glycine 12–threonine 17 provides a ligand contact to GTP. The Gly-Pro-Asn (GPN)-loop; involved in dimer interface signature appears at glycine 69–asparagine 71. Serine 175–aspartate 178 serves as a coordination point for GTP.

The protein belongs to the GPN-loop GTPase family. As to quaternary structure, heterodimers with NPA3/GPN1 or GPN3. Binds to RNA polymerase II (RNAPII).

The protein localises to the cytoplasm. Small GTPase required for proper localization of RNA polymerase II and III (RNAPII and RNAPIII). May act at an RNAP assembly step prior to nuclear import. Required for establishment of sister chromatid cohesion. In Saccharomyces cerevisiae (strain ATCC 204508 / S288c) (Baker's yeast), this protein is GPN-loop GTPase 2.